The chain runs to 397 residues: Endoglucanase (397 aa).

Residue Glu-194 is the Proton donor of the active site. Glu-317 functions as the Nucleophile in the catalytic mechanism.

This sequence belongs to the glycosyl hydrolase 5 (cellulase A) family.

It catalyses the reaction Endohydrolysis of (1-&gt;4)-beta-D-glucosidic linkages in cellulose, lichenin and cereal beta-D-glucans.. In Paenibacillus polymyxa (Bacillus polymyxa), this protein is Endoglucanase.